The chain runs to 319 residues: UPF0761 membrane protein PBPRA3489 (319 aa).

6 consecutive transmembrane segments (helical) span residues Leu-50–Leu-70, Val-107–Leu-127, Phe-143–Val-163, Ala-188–Leu-208, Ala-215–Leu-235, and Ala-249–Leu-269.

This sequence belongs to the UPF0761 family.

It is found in the cell inner membrane. This chain is UPF0761 membrane protein PBPRA3489, found in Photobacterium profundum (strain SS9).